Here is a 398-residue protein sequence, read N- to C-terminus: MRESVHTNTSIWSKGMMSVIAAQFLSAFGDNALLFATLALLKAQFYPDWSQPILQMVFVGAYILFAPFVGQVADSFAKGRVMMFANGLKLLGAASICFGFNPFVGYTLVGIGAAAYSPAKYGILGELTTGDKLVKANGLMEASTIAAILLGSVAGGVLADWHVIAALVACALAYAGAVVANLFIPKLAAARPGQSWHLRKMVRSFFCACISLWRNGETRFSLVGTSLFWGAGVTLRFLLVLWVPVALGITDNATPTYLNAMVAIGIVVGAGAAAKLVTLETVARCMPAGILIGVVVLIFSLQHALLPAYALLTLIGVLGGFFVVPLNALLQERGKKSVGAGNAIAVQNLGENSAMLLMLGLYSLAVLVGIPVVAIGIGFGGLFALAIAALWIWQRRQM.

Helical transmembrane passes span 19 to 39 (VIAA…ATLA), 53 to 73 (ILQM…GQVA), 91 to 111 (LGAA…LVGI), 139 to 159 (LMEA…GVLA), 164 to 184 (IAAL…NLFI), 227 to 247 (LFWG…PVAL), 257 to 277 (YLNA…AKLV), 281 to 301 (TVAR…IFSL), 304 to 324 (ALLP…FFVV), 350 to 370 (GENS…LVGI), and 372 to 392 (VVAI…ALWI).

Belongs to the major facilitator superfamily. LplT (TC 2.A.1.42) family.

The protein resides in the cell inner membrane. In terms of biological role, catalyzes the facilitated diffusion of 2-acyl-glycero-3-phosphoethanolamine (2-acyl-GPE) into the cell. The chain is Lysophospholipid transporter LplT from Citrobacter koseri (strain ATCC BAA-895 / CDC 4225-83 / SGSC4696).